A 494-amino-acid chain; its full sequence is DNA-directed DNA/RNA polymerase mu (494 aa).

The tract at residues 1 to 24 is disordered; it reads MLPKRRRARVGSPSGDAASSTPPS. Residue Ser-12 is modified to Phosphoserine. The BRCT domain maps to 22 to 122; sequence PPSTRFPGVA…QPVPVECRHR (101 aa). An involved in ssDNA binding region spans residues 323–332; it reads RGKLQGHDVD. Asp-330, Asp-332, and Asp-418 together coordinate Mg(2+).

The protein belongs to the DNA polymerase type-X family. Mg(2+) serves as cofactor. Expressed in a number of tissues. Abundant in thymus.

It localises to the nucleus. The enzyme catalyses DNA(n) + a 2'-deoxyribonucleoside 5'-triphosphate = DNA(n+1) + diphosphate. In terms of biological role, gap-filling polymerase involved in repair of DNA double-strand breaks by non-homologous end joining (NHEJ). Participates in immunoglobulin (Ig) light chain gene rearrangement in V(D)J recombination. The polypeptide is DNA-directed DNA/RNA polymerase mu (POLM) (Homo sapiens (Human)).